We begin with the raw amino-acid sequence, 66 residues long: MPKMKTHRGAAKRVKRTGSGKLKRSRAFTSHLFANKSTKQKRKLRKASLVSKSDMKRVKQLLAYKK.

Residues 1 to 26 (MPKMKTHRGAAKRVKRTGSGKLKRSR) are compositionally biased toward basic residues. The segment at 1–49 (MPKMKTHRGAAKRVKRTGSGKLKRSRAFTSHLFANKSTKQKRKLRKASL) is disordered.

The protein belongs to the bacterial ribosomal protein bL35 family.

In Staphylococcus saprophyticus subsp. saprophyticus (strain ATCC 15305 / DSM 20229 / NCIMB 8711 / NCTC 7292 / S-41), this protein is Large ribosomal subunit protein bL35.